We begin with the raw amino-acid sequence, 396 residues long: Vitamin K-dependent protein Z (396 aa).

Residues 1 to 46 form the Gla domain; the sequence is AGSYLLEELFEGHLEKECWEEICVYEEAREVFEDDETTDEFWRTYM. 4-carboxyglutamate occurs at positions 7, 8, 11, 15, 17, 20, 21, 26, 27, 30, 33, 36, and 40. An intrachain disulfide couples cysteine 18 to cysteine 23. 2 EGF-like domains span residues 47–83 and 85–126; these read GGSPCASQPCLNNGSCQDSIRGYACTCAPGYEGPNCA and AESE…RSCL. Disulfide bonds link cysteine 51/cysteine 62, cysteine 56/cysteine 71, cysteine 73/cysteine 82, cysteine 89/cysteine 101, cysteine 97/cysteine 110, cysteine 112/cysteine 125, and cysteine 169/cysteine 185. Serine 53 is a glycosylation site (O-linked (Glc...) serine). N-linked (GlcNAc...) asparagine glycosylation is present at asparagine 59. (3R)-3-hydroxyaspartate is present on aspartate 64. The Peptidase S1 domain maps to 135–357; sequence TLGPECCQRP…YALWLRQVTQ (223 aa). N-linked (GlcNAc...) asparagine glycosylation is found at asparagine 191 and asparagine 289. An intrachain disulfide couples cysteine 284 to cysteine 298. The segment at 356-396 is disordered; it reads TQQPSRASPRGDRGQGRDGEPVPGDRGGRWAPTALPPGPLV. The segment covering 364–375 has biased composition (basic and acidic residues); the sequence is PRGDRGQGRDGE. The O-linked (GalNAc...) threonine glycan is linked to threonine 388.

The protein belongs to the peptidase S1 family. The iron and 2-oxoglutarate dependent 3-hydroxylation of aspartate and asparagine is (R) stereospecific within EGF domains. In terms of tissue distribution, plasma.

The protein resides in the secreted. Functionally, inhibits activity of the coagulation protease factor Xa in the presence of SERPINA10, calcium and phospholipids. Appears to assist hemostasis by binding thrombin and promoting its association with phospholipid vesicles. The chain is Vitamin K-dependent protein Z (PROZ) from Bos taurus (Bovine).